Consider the following 471-residue polypeptide: Ribosomal protein uS12 methylthiotransferase RimO (471 aa).

The 116-residue stretch at 23-138 (PKIGFVSLGC…VMDAVHVHVP (116 aa)) folds into the MTTase N-terminal domain. Residues cysteine 32, cysteine 68, cysteine 97, cysteine 169, cysteine 173, and cysteine 176 each coordinate [4Fe-4S] cluster. In terms of domain architecture, Radical SAM core spans 155 to 396 (LTPRHYAYLK…MAVAEAVSAE (242 aa)). The 73-residue stretch at 399-471 (RERVGAEMQV…QGHDLVGQPL (73 aa)) folds into the TRAM domain.

The protein belongs to the methylthiotransferase family. RimO subfamily. Requires [4Fe-4S] cluster as cofactor.

The protein resides in the cytoplasm. The enzyme catalyses L-aspartate(89)-[ribosomal protein uS12]-hydrogen + (sulfur carrier)-SH + AH2 + 2 S-adenosyl-L-methionine = 3-methylsulfanyl-L-aspartate(89)-[ribosomal protein uS12]-hydrogen + (sulfur carrier)-H + 5'-deoxyadenosine + L-methionine + A + S-adenosyl-L-homocysteine + 2 H(+). Catalyzes the methylthiolation of an aspartic acid residue of ribosomal protein uS12. This is Ribosomal protein uS12 methylthiotransferase RimO from Methylibium petroleiphilum (strain ATCC BAA-1232 / LMG 22953 / PM1).